Reading from the N-terminus, the 333-residue chain is Mitochondrial 2-oxoglutarate/malate carrier protein (333 aa).

3 Solcar repeats span residues 29-127 (FRLI…LFER), 136-227 (PGFL…SKQF), and 236-325 (DNIL…MNKA). 6 consecutive transmembrane segments (helical) span residues 30–61 (RLIALGTCGDSCTHVRQPPKTWMGATVFVQPL), 102–120 (GLSAGLLRQATYTTTRLGI), 138–159 (FLLKALIGMTAGATGAFVGTPA), 202–221 (GCIPTMARAVVVNAAQLASY), 241–259 (HFCASMISGLVTTAASMPV), and 300–319 (GFTPYYARLGPHTVLTFIFL).

Belongs to the mitochondrial carrier (TC 2.A.29) family. In terms of assembly, interacts with SMIM26.

The protein localises to the membrane. It catalyses the reaction (S)-malate(in) + 2-oxoglutarate(out) = (S)-malate(out) + 2-oxoglutarate(in). The enzyme catalyses malonate(in) + 2-oxoglutarate(out) = malonate(out) + 2-oxoglutarate(in). It carries out the reaction succinate(in) + 2-oxoglutarate(out) = succinate(out) + 2-oxoglutarate(in). The catalysed reaction is maleate(in) + 2-oxoglutarate(out) = maleate(out) + 2-oxoglutarate(in). It catalyses the reaction oxaloacetate(in) + 2-oxoglutarate(out) = oxaloacetate(out) + 2-oxoglutarate(in). Functionally, catalyzes the transport of 2-oxoglutarate (alpha-oxoglutarate) across the inner mitochondrial membrane in an electroneutral exchange for malate. Can also exchange 2-oxoglutarate for other dicarboxylic acids such as malonate, succinate, maleate and oxaloacetate, although with lower affinity. Contributes to several metabolic processes, including the malate-aspartate shuttle, the oxoglutarate/isocitrate shuttle, in gluconeogenesis from lactate, and in nitrogen metabolism. Maintains mitochondrial fusion and fission events, and the organization and morphology of cristae. Involved in the regulation of apoptosis. Helps protect from cytotoxic-induced apoptosis by modulating glutathione levels in mitochondria. This is Mitochondrial 2-oxoglutarate/malate carrier protein (SLC25A11) from Sus scrofa (Pig).